A 65-amino-acid chain; its full sequence is Protein translocase subunit SecE (65 aa).

Residues 1–27 lie on the Cytoplasmic side of the membrane; it reads MEKLKEFLKGVRDELKRVVWPSRELVV. A helical membrane pass occupies residues 28 to 59; sequence KATISVIIFSLAIGVYLWILDLTFTKIISFIL. At 60 to 65 the chain is on the periplasmic side; it reads SLRGSL.

This sequence belongs to the SecE/SEC61-gamma family. In terms of assembly, component of the Sec protein translocase complex. Heterotrimer consisting of SecY, SecE and SecG subunits. The heterotrimers can form oligomers, although 1 heterotrimer is thought to be able to translocate proteins. Interacts with SecDF, and other proteins may be involved. The channel interacts with SecA via subunit SecY.

The protein resides in the cell inner membrane. Its function is as follows. Essential subunit of the protein translocation channel SecYEG. Clamps together the 2 halves of SecY. May contact the channel plug during translocation. This is Protein translocase subunit SecE from Aquifex aeolicus (strain VF5).